The primary structure comprises 84 residues: MSEFWLCFNCCIAEQPQPKRRRRIDRSMIGEPTNFVHTAHVGSGDLFSGMNSVSSIQNQMQSKGGYGGGMAANVQMQLVDTKAG.

2 S-palmitoyl cysteine lipidation sites follow: Cys-10 and Cys-11. The CRIB domain occupies 29–42 (IGEPTNFVHTAHVG). 2 positions are modified to phosphoserine: Ser-43 and Ser-52.

The protein belongs to the CDC42SE/SPEC family. Interacts with CDC42 (in GTP-bound form). Interacts weakly with RAC1 and not at all with RHOA.

It localises to the cytoplasm. The protein localises to the cytoskeleton. Its subcellular location is the cell membrane. The protein resides in the cell projection. It is found in the phagocytic cup. In terms of biological role, probably involved in the organization of the actin cytoskeleton by acting downstream of CDC42, inducing actin filament assembly. Alters CDC42-induced cell shape changes. In activated T-cells, may play a role in CDC42-mediated F-actin accumulation at the immunological synapse. May play a role in early contractile events in phagocytosis in macrophages. The chain is CDC42 small effector protein 2 (CDC42SE2) from Bos taurus (Bovine).